The primary structure comprises 245 residues: Chloride intracellular channel protein 2 (245 aa).

The interval 1–96 (MASLALNTQA…EEFLEKTLAP (96 aa)) is required for insertion into the membrane. E25 is a glutathione binding site. The short motif at 30–33 (CPFC) is the G-site element. C30 and C33 are joined by a disulfide. A helical membrane pass occupies residues 32-52 (FCQRLFMILWLKGVKFNVTTI). Residues 76–239 (NKELKTDFIK…PEDKEIENTY (164 aa)) form the GST C-terminal domain. A glutathione-binding site is contributed by H227.

The protein belongs to the chloride channel CLIC family. In terms of assembly, monomer. Interacts with TRAPPC2 and RYR2.

The protein resides in the cytoplasm. The protein localises to the membrane. The enzyme catalyses chloride(in) = chloride(out). It catalyses the reaction tert-butyl hydroperoxide + 2 glutathione = tert-butanol + glutathione disulfide + H2O. It carries out the reaction cumene hydroperoxide + 2 glutathione = 2-phenylpropan-2-ol + glutathione disulfide + H2O. Functionally, in the soluble state, catalyzes glutaredoxin-like thiol disulfide exchange reactions with reduced glutathione as electron donor. Displays weak glutathione peroxidase activity. Can insert into membranes and form chloride ion channels. Membrane insertion seems to be redox-regulated and may occur only under oxidizing conditions. Modulates the activity of RYR2 and inhibits calcium influx. The chain is Chloride intracellular channel protein 2 from Rattus norvegicus (Rat).